Here is a 206-residue protein sequence, read N- to C-terminus: Large ribosomal subunit protein bL25 (206 aa).

It belongs to the bacterial ribosomal protein bL25 family. CTC subfamily. Part of the 50S ribosomal subunit; part of the 5S rRNA/L5/L18/L25 subcomplex. Contacts the 5S rRNA. Binds to the 5S rRNA independently of L5 and L18.

In terms of biological role, this is one of the proteins that binds to the 5S RNA in the ribosome where it forms part of the central protuberance. The chain is Large ribosomal subunit protein bL25 from Bartonella henselae (strain ATCC 49882 / DSM 28221 / CCUG 30454 / Houston 1) (Rochalimaea henselae).